The sequence spans 198 residues: Endonuclease V (198 aa).

Residues D38 and D101 each coordinate Mg(2+).

It belongs to the endonuclease V family. Requires Mg(2+) as cofactor.

The protein resides in the cytoplasm. It carries out the reaction Endonucleolytic cleavage at apurinic or apyrimidinic sites to products with a 5'-phosphate.. Its function is as follows. DNA repair enzyme involved in the repair of deaminated bases. Selectively cleaves double-stranded DNA at the second phosphodiester bond 3' to a deoxyinosine leaving behind the intact lesion on the nicked DNA. The polypeptide is Endonuclease V (Saccharolobus islandicus (strain M.14.25 / Kamchatka #1) (Sulfolobus islandicus)).